The following is a 483-amino-acid chain: Glycogen synthase (483 aa).

ADP-alpha-D-glucose is bound at residue Lys-15.

Belongs to the glycosyltransferase 1 family. Bacterial/plant glycogen synthase subfamily.

It catalyses the reaction [(1-&gt;4)-alpha-D-glucosyl](n) + ADP-alpha-D-glucose = [(1-&gt;4)-alpha-D-glucosyl](n+1) + ADP + H(+). Its pathway is glycan biosynthesis; glycogen biosynthesis. Its function is as follows. Synthesizes alpha-1,4-glucan chains using ADP-glucose. The chain is Glycogen synthase from Desulfatibacillum aliphaticivorans.